We begin with the raw amino-acid sequence, 316 residues long: Cell division protein ZipA (316 aa).

The Periplasmic portion of the chain corresponds to 1 to 5 (MQELR). A helical membrane pass occupies residues 6–26 (FVLIVVGALAIAALLFHGLWS). At 27–316 (SKKEGKAKFG…QIVEFNAANA (290 aa)) the chain is on the cytoplasmic side. The tract at residues 36-65 (GNKPLGKLDVDQGDKDSVEQERSFAPATED) is disordered. Basic and acidic residues predominate over residues 41 to 57 (GKLDVDQGDKDSVEQER).

The protein belongs to the ZipA family. Interacts with FtsZ via their C-terminal domains.

The protein resides in the cell inner membrane. Essential cell division protein that stabilizes the FtsZ protofilaments by cross-linking them and that serves as a cytoplasmic membrane anchor for the Z ring. Also required for the recruitment to the septal ring of downstream cell division proteins. The sequence is that of Cell division protein ZipA from Vibrio parahaemolyticus serotype O3:K6 (strain RIMD 2210633).